Consider the following 342-residue polypeptide: Ribosomal RNA small subunit methyltransferase C (342 aa).

Belongs to the methyltransferase superfamily. RsmC family. Monomer.

It is found in the cytoplasm. It carries out the reaction guanosine(1207) in 16S rRNA + S-adenosyl-L-methionine = N(2)-methylguanosine(1207) in 16S rRNA + S-adenosyl-L-homocysteine + H(+). Specifically methylates the guanine in position 1207 of 16S rRNA in the 30S particle. The sequence is that of Ribosomal RNA small subunit methyltransferase C from Aeromonas hydrophila subsp. hydrophila (strain ATCC 7966 / DSM 30187 / BCRC 13018 / CCUG 14551 / JCM 1027 / KCTC 2358 / NCIMB 9240 / NCTC 8049).